Consider the following 221-residue polypeptide: Small ribosomal subunit protein uS3 (221 aa).

The 69-residue stretch at 39–107 (IRNYIKEKLY…TVILNIIEVK (69 aa)) folds into the KH type-2 domain.

It belongs to the universal ribosomal protein uS3 family. In terms of assembly, part of the 30S ribosomal subunit. Forms a tight complex with proteins S10 and S14.

Its function is as follows. Binds the lower part of the 30S subunit head. Binds mRNA in the 70S ribosome, positioning it for translation. The chain is Small ribosomal subunit protein uS3 from Caldanaerobacter subterraneus subsp. tengcongensis (strain DSM 15242 / JCM 11007 / NBRC 100824 / MB4) (Thermoanaerobacter tengcongensis).